The primary structure comprises 170 residues: Adenine phosphoribosyltransferase (170 aa).

It belongs to the purine/pyrimidine phosphoribosyltransferase family. As to quaternary structure, homodimer.

The protein resides in the cytoplasm. It carries out the reaction AMP + diphosphate = 5-phospho-alpha-D-ribose 1-diphosphate + adenine. Its pathway is purine metabolism; AMP biosynthesis via salvage pathway; AMP from adenine: step 1/1. Catalyzes a salvage reaction resulting in the formation of AMP, that is energically less costly than de novo synthesis. In Acaryochloris marina (strain MBIC 11017), this protein is Adenine phosphoribosyltransferase.